Here is a 292-residue protein sequence, read N- to C-terminus: MPSASKNFRLQSKYVFLTYPKCSSQRDDLFQFLWEKLTPFLIFFLGVASELHQDGTTHYHALIQLDKKPCIRDPSFFDFEGNHPNIQPARNSKQVLDYISKDGDIKTRGDFRDHKVSPRKSDARWRTIIQTATSKEEYLDMIKEEFPHEWATKLQWLEYSANKLFPPQPEQYVSPFTESDLRCHEDLHNWRETHLYHVSIDAYTFIHPVSYDQAQSDLEWMADLTRMREGLGSDTPASTSADQLVPERPPGLEVSGDTTTGTGPSTSPTTMNTPPIISSTTSPSSSSHCGSN.

The CRESS-DNA virus Rep endonuclease domain occupies 9–111 (RLQSKYVFLT…DGDIKTRGDF (103 aa)). The RCR-1 motif lies at 16 to 19 (FLTY). A divalent metal cation-binding residues include Glu-50, His-58, and His-60. The RCR-2 signature appears at 58 to 60 (HYH). Residue Tyr-98 is the For DNA cleavage activity of the active site. Residues 98–101 (YISK) carry the RCR-3 motif. A divalent metal cation is bound at residue Asp-102. An oligomerization region spans residues 160-172 (SANKLFPPQPEQY). The tract at residues 181–185 (LRCHE) is binding to RBR1. A disordered region spans residues 230–292 (GLGSDTPAST…PSSSSHCGSN (63 aa)). Low complexity predominate over residues 255-292 (SGDTTTGTGPSTSPTTMNTPPIISSTTSPSSSSHCGSN).

It belongs to the geminiviridae Rep protein family. Homooligomer. Interacts with host retinoblastoma-related protein 1 (RBR1), and may thereby deregulate the host cell cycle. Part of the C- and V-complexes which are RepA-Rep-DNA complexes involved in the c-sense and v-sense transcription. Mg(2+) serves as cofactor. Requires Mn(2+) as cofactor.

The protein resides in the host nucleus. It is found in the host cytoplasm. Functionally, implicated in enhancement of V-sense gene expression. Acts a an inhibitor of C-sense gene transcription. This Bean yellow dwarf virus (BeYDV) protein is Replication-associated protein A.